We begin with the raw amino-acid sequence, 104 residues long: Naphthalene 1,2-dioxygenase system, ferredoxin component (104 aa).

A Rieske domain is found at 6-101 (IDAVALYEIP…VKIEGQRVMI (96 aa)). 4 residues coordinate [2Fe-2S] cluster: Cys-45, His-47, Cys-64, and His-67.

It belongs to the bacterial ring-hydroxylating dioxygenase ferredoxin component family. In terms of assembly, the naphthalene dioxygenase (NDO) multicomponent enzyme system is composed of an electron transfer component and a dioxygenase component (iron sulfur protein (ISP)). The electron transfer component is composed of a ferredoxin reductase (NdoR) and a ferredoxin (NdoA), and the dioxygenase component is formed of a heterohexamer (trimer of heterodimers) of three large alpha subunits (NdoB) and three small beta subunits (NdoC). The cofactor is [2Fe-2S] cluster.

It participates in aromatic compound metabolism; naphthalene degradation. Component of the naphthalene dioxygenase (NDO) multicomponent enzyme system which catalyzes the incorporation of both atoms of molecular oxygen into naphthalene to form cis-(1R,2S)-dihydroxy-1,2-dihydronaphthalene. Functions as an intermediate electron transfer protein via a specific interaction with iron sulfur protein components (ISP) (NdoB and NdoC). The chain is Naphthalene 1,2-dioxygenase system, ferredoxin component from Pseudomonas aeruginosa.